The sequence spans 436 residues: Tol-Pal system protein TolB (436 aa).

The first 19 residues, Met1–Ala19, serve as a signal peptide directing secretion.

This sequence belongs to the TolB family. The Tol-Pal system is composed of five core proteins: the inner membrane proteins TolA, TolQ and TolR, the periplasmic protein TolB and the outer membrane protein Pal. They form a network linking the inner and outer membranes and the peptidoglycan layer.

The protein localises to the periplasm. Functionally, part of the Tol-Pal system, which plays a role in outer membrane invagination during cell division and is important for maintaining outer membrane integrity. This chain is Tol-Pal system protein TolB, found in Rhizobium etli (strain ATCC 51251 / DSM 11541 / JCM 21823 / NBRC 15573 / CFN 42).